The following is a 305-amino-acid chain: Fructose-bisphosphate aldolase (305 aa).

D-glyceraldehyde 3-phosphate is bound at residue serine 49. The active-site Proton donor is the aspartate 80. Positions 81, 102, 132, and 178 each coordinate Zn(2+). Glycine 179 provides a ligand contact to dihydroxyacetone phosphate. Histidine 208 contributes to the Zn(2+) binding site. Residues 209 to 211 (GAS) and 251 to 254 (NTDT) contribute to the dihydroxyacetone phosphate site.

The protein belongs to the class II fructose-bisphosphate aldolase family. In terms of assembly, homotetramer. The cofactor is Zn(2+).

The catalysed reaction is beta-D-fructose 1,6-bisphosphate = D-glyceraldehyde 3-phosphate + dihydroxyacetone phosphate. The protein operates within carbohydrate degradation; glycolysis; D-glyceraldehyde 3-phosphate and glycerone phosphate from D-glucose: step 4/4. Catalyzes the aldol condensation of dihydroxyacetone phosphate (DHAP or glycerone-phosphate) with glyceraldehyde 3-phosphate (G3P) to form fructose 1,6-bisphosphate (FBP) in gluconeogenesis and the reverse reaction in glycolysis. This Thermus caldophilus protein is Fructose-bisphosphate aldolase.